We begin with the raw amino-acid sequence, 381 residues long: Secretion apparatus protein BsaZ (381 aa).

The next 4 membrane-spanning stretches (helical) occupy residues I28–T48, I80–S100, A134–L154, and I175–V195. Residues N343 to A381 form a disordered region. The span at G364–A381 shows a compositional bias: low complexity.

This sequence belongs to the type III secretion exporter family.

It localises to the cell membrane. Part of the bsa type III secretion system, is involved in the intracellular replication of invading bacteria inside the host cell. Probably necessary for the lysis of the vacuole membrane and escape into the host cell cytoplasm. The protein is Secretion apparatus protein BsaZ (bsaZ) of Burkholderia thailandensis (strain ATCC 700388 / DSM 13276 / CCUG 48851 / CIP 106301 / E264).